Here is a 675-residue protein sequence, read N- to C-terminus: MESSVAPFPHRRTHLPNRNYRSLLYHFCSSFDREPQISLATPAVLQELVLRTEIAQESPGETCEPPENLSITESKLNGVSGDSSGEKVETISQEKSLMLGDICDGIDLQDASVVSRHTDFFDSFELMINETQDSVPESCVNLFEALDVNDYDIVQNVLEKPNIATQVQVDPVESEKKAEEVPKSVESNEVISSGVLEACNGTVQREMELEKPVDNSPVLVDSVSRIVGGDDVEEGEISGDDNDDMLVEDDETVERHEEYQVSQDGTGNSHLTSHKSFGVEVMNVDNQAKKIDQTFSNEAKMDPGTSIKKRSAPSKDAKARKRAKARIKRAQERIALGVKKLKLKPVAPKPKPIKYCRHYLKGRCHEGDKCKFSHDTIPETKCSPCCYFATQSCMKGDDCPFDHDLSKYPCNNFITKGFCYRGDSCLFSHKGTPQSASDTPSANVTVSSTKITAASFSPQKTKKQSVRDAIAKLPAIQARVSSSVAFLKPSSHSNQRNSSDASSSKINEHVTPPQVPPLRKPSVAPKGMSFLSLDKTSQEDTVKASSASKPNTDNSDSQTLKQSQQGSFLPLGPPKGISFLSFASEEQKTLNREPQKPASSKNLKTTPSSHIQSSLLSAMKLAAEFESAKVERGNNDPTEAVNKSNVTVDTAVTRNSGNISSKILEFLSSFSHGKN.

A disordered region spans residues 294 to 320 (TFSNEAKMDPGTSIKKRSAPSKDAKAR). Basic residues predominate over residues 307–320 (IKKRSAPSKDAKAR). Residues 314 to 342 (SKDAKARKRAKARIKRAQERIALGVKKLK) adopt a coiled-coil conformation. 3 consecutive C3H1-type zinc fingers follow at residues 350-377 (PKPI…HDTI), 384-406 (PCCY…HDLS), and 409-432 (PCNN…HKGT). 2 disordered regions span residues 487–572 (LKPS…LPLG) and 586–612 (EQKT…SHIQ). Over residues 490–504 (SSHSNQRNSSDASSS) the composition is skewed to low complexity. The segment covering 543-567 (KASSASKPNTDNSDSQTLKQSQQGS) has biased composition (polar residues). Over residues 586–595 (EQKTLNREPQ) the composition is skewed to basic and acidic residues. Polar residues predominate over residues 597-612 (PASSKNLKTTPSSHIQ).

Its function is as follows. Possesses RNA-binding and ribonuclease activities in vitro. The sequence is that of Zinc finger CCCH domain-containing protein 65 (EMB1789) from Arabidopsis thaliana (Mouse-ear cress).